A 315-amino-acid polypeptide reads, in one-letter code: Methionyl-tRNA formyltransferase (315 aa).

113–116 (SLLP) lines the (6S)-5,6,7,8-tetrahydrofolate pocket.

This sequence belongs to the Fmt family.

It carries out the reaction L-methionyl-tRNA(fMet) + (6R)-10-formyltetrahydrofolate = N-formyl-L-methionyl-tRNA(fMet) + (6S)-5,6,7,8-tetrahydrofolate + H(+). In terms of biological role, attaches a formyl group to the free amino group of methionyl-tRNA(fMet). The formyl group appears to play a dual role in the initiator identity of N-formylmethionyl-tRNA by promoting its recognition by IF2 and preventing the misappropriation of this tRNA by the elongation apparatus. The chain is Methionyl-tRNA formyltransferase from Shigella boydii serotype 4 (strain Sb227).